The primary structure comprises 158 residues: Cytosine deaminase (158 aa).

Positions 9–129 (KWDQKGMDIA…KYLQTRGHEV (121 aa)) constitute a CMP/dCMP-type deaminase domain. Residue Asn-51 coordinates substrate. His-62 is a binding site for Zn(2+). Glu-64 functions as the Proton donor in the catalytic mechanism. Zn(2+) is bound by residues Cys-91 and Cys-94. Asp-155 is a substrate binding site.

This sequence belongs to the cytidine and deoxycytidylate deaminase family. As to quaternary structure, homodimer. The cofactor is Zn(2+).

It is found in the cytoplasm. It localises to the nucleus. The catalysed reaction is cytosine + H2O + H(+) = uracil + NH4(+). It functions in the pathway pyrimidine metabolism; UMP biosynthesis via salvage pathway; uracil from cytosine: step 1/1. Its function is as follows. Catalyzes the hydrolytic deamination of cytosine to uracil or 5-methylcytosine to thymine. Is involved in the pyrimidine salvage pathway, which allows the cell to utilize cytosine for pyrimidine nucleotide synthesis. This is Cytosine deaminase from Saccharomyces cerevisiae (strain ATCC 204508 / S288c) (Baker's yeast).